Here is a 482-residue protein sequence, read N- to C-terminus: UDP-N-acetylmuramoyl-L-alanyl-D-glutamate--2,6-diaminopimelate ligase (482 aa).

A UDP-N-acetyl-alpha-D-muramoyl-L-alanyl-D-glutamate-binding site is contributed by Ser30. Position 111-117 (111-117 (GTNGKTT)) interacts with ATP. Residues 153–154 (TT), Ser180, Gln186, and Arg188 each bind UDP-N-acetyl-alpha-D-muramoyl-L-alanyl-D-glutamate. Lys220 is modified (N6-carboxylysine). Meso-2,6-diaminopimelate-binding positions include Arg378, 402–405 (DNPR), Gly455, and Glu459. The Meso-diaminopimelate recognition motif motif lies at 402 to 405 (DNPR).

This sequence belongs to the MurCDEF family. MurE subfamily. Requires Mg(2+) as cofactor. Post-translationally, carboxylation is probably crucial for Mg(2+) binding and, consequently, for the gamma-phosphate positioning of ATP.

The protein resides in the cytoplasm. The catalysed reaction is UDP-N-acetyl-alpha-D-muramoyl-L-alanyl-D-glutamate + meso-2,6-diaminopimelate + ATP = UDP-N-acetyl-alpha-D-muramoyl-L-alanyl-gamma-D-glutamyl-meso-2,6-diaminopimelate + ADP + phosphate + H(+). Its pathway is cell wall biogenesis; peptidoglycan biosynthesis. Functionally, catalyzes the addition of meso-diaminopimelic acid to the nucleotide precursor UDP-N-acetylmuramoyl-L-alanyl-D-glutamate (UMAG) in the biosynthesis of bacterial cell-wall peptidoglycan. This chain is UDP-N-acetylmuramoyl-L-alanyl-D-glutamate--2,6-diaminopimelate ligase, found in Bacteroides thetaiotaomicron (strain ATCC 29148 / DSM 2079 / JCM 5827 / CCUG 10774 / NCTC 10582 / VPI-5482 / E50).